Here is a 172-residue protein sequence, read N- to C-terminus: Capsid protein (172 aa).

A disordered region spans residues 1-26 (MASKWNWSGTKGRRTPRRPYGRPYKS). Over residues 11–20 (KGRRTPRRPY) the composition is skewed to basic residues.

It belongs to the nanoviridae capsid protein family.

The protein localises to the virion. The polypeptide is Capsid protein (DNA-S) (Faba bean necrotic yellows virus (isolate Egyptian EV1-93) (FBNYV)).